Consider the following 253-residue polypeptide: Chorismate mutase 2, cytosolic (253 aa).

Residues Asp2 to Asp253 form the Chorismate mutase domain.

In terms of assembly, homodimer. Interacts with Cmu1 of the fungal pathogen Ustilago maydis.

Its subcellular location is the cytoplasm. It localises to the cytosol. The catalysed reaction is chorismate = prephenate. It participates in metabolic intermediate biosynthesis; prephenate biosynthesis; prephenate from chorismate: step 1/1. Its activity is regulated as follows. No allosteric regulation. The chain is Chorismate mutase 2, cytosolic from Zea mays (Maize).